The sequence spans 498 residues: Inosine-5'-monophosphate dehydrogenase (498 aa).

CBS domains are found at residues 98 to 155 (MVVN…EQKI) and 159 to 216 (MTRE…PHAS). NAD(+) contacts are provided by residues Asp-253 and 303–305 (GIG). Residues Gly-305 and Gly-307 each contribute to the K(+) site. Ser-308 serves as a coordination point for IMP. Cys-310 contributes to the K(+) binding site. Catalysis depends on Cys-310, which acts as the Thioimidate intermediate. Residues 343–345 (DGG), 366–367 (GS), and 390–394 (YRGMG) each bind IMP. The active-site Proton acceptor is Arg-406. An IMP-binding site is contributed by Glu-421. K(+) contacts are provided by Glu-475, Ser-476, and His-477.

The protein belongs to the IMPDH/GMPR family. In terms of assembly, homotetramer. It depends on K(+) as a cofactor.

It carries out the reaction IMP + NAD(+) + H2O = XMP + NADH + H(+). It participates in purine metabolism; XMP biosynthesis via de novo pathway; XMP from IMP: step 1/1. Its activity is regulated as follows. Mycophenolic acid (MPA) is a non-competitive inhibitor that prevents formation of the closed enzyme conformation by binding to the same site as the amobile flap. In contrast, mizoribine monophosphate (MZP) is a competitive inhibitor that induces the closed conformation. MPA is a potent inhibitor of mammalian IMPDHs but a poor inhibitor of the bacterial enzymes. MZP is a more potent inhibitor of bacterial IMPDH. In terms of biological role, catalyzes the conversion of inosine 5'-phosphate (IMP) to xanthosine 5'-phosphate (XMP), the first committed and rate-limiting step in the de novo synthesis of guanine nucleotides, and therefore plays an important role in the regulation of cell growth. The sequence is that of Inosine-5'-monophosphate dehydrogenase from Rhizobium tropici.